We begin with the raw amino-acid sequence, 195 residues long: Pyruvoyl-dependent arginine decarboxylase AaxB (195 aa).

Residue Ser53 is modified to Pyruvic acid (Ser).

This sequence belongs to the pyruvoyl-dependent arginine decarboxylase family. As to quaternary structure, trimer of an alpha-beta dimer. Requires pyruvate as cofactor.

It localises to the cytoplasm. The catalysed reaction is L-arginine + H(+) = agmatine + CO2. Part of the AaxABC system, catalyzes the decarboxylation of L-arginine. The arginine uptake by the bacterium in the macrophage may be a virulence factor against the host innate immune response. This Chlamydia muridarum (strain MoPn / Nigg) protein is Pyruvoyl-dependent arginine decarboxylase AaxB (aaxB).